The chain runs to 96 residues: Co-chaperonin GroES (96 aa).

This sequence belongs to the GroES chaperonin family. Heptamer of 7 subunits arranged in a ring. Interacts with the chaperonin GroEL.

The protein resides in the cytoplasm. In terms of biological role, together with the chaperonin GroEL, plays an essential role in assisting protein folding. The GroEL-GroES system forms a nano-cage that allows encapsulation of the non-native substrate proteins and provides a physical environment optimized to promote and accelerate protein folding. GroES binds to the apical surface of the GroEL ring, thereby capping the opening of the GroEL channel. The sequence is that of Co-chaperonin GroES from Paraburkholderia phytofirmans (strain DSM 17436 / LMG 22146 / PsJN) (Burkholderia phytofirmans).